The following is a 214-amino-acid chain: MGRGKLEIRKIENKTNRQVTFSKRRNGIMKKAQELTVLCDAKVSLLMISSTHKLHHYLSPGVSLKKMYDEYQKIEGVDLWRKQWERMQEQHRKVLELNSLLRREISRRMGGDLEGLTLVELSALQQEMEEAIIQIRNKKYHTIKNQTGTTRKKIKNLEERHTDLVMELEAKFRGPQFAIGEDDPRNYEAAAAAAVYGNDVAAANLFALSRHPIT.

The MADS-box domain maps to 3 to 58 (RGKLEIRKIENKTNRQVTFSKRRNGIMKKAQELTVLCDAKVSLLMISSTHKLHHYL). One can recognise a K-box domain in the interval 84–174 (WERMQEQHRK…VMELEAKFRG (91 aa)).

In terms of tissue distribution, in flowers. Not found in vegetative tissues.

The protein localises to the nucleus. The polypeptide is MADS-box protein CMB2 (CMB2) (Dianthus caryophyllus (Carnation)).